We begin with the raw amino-acid sequence, 233 residues long: tRNA (guanine-N(1)-)-methyltransferase (233 aa).

Residues G110 and 130–135 (IGDYVM) contribute to the S-adenosyl-L-methionine site.

Belongs to the RNA methyltransferase TrmD family. In terms of assembly, homodimer.

It localises to the cytoplasm. The enzyme catalyses guanosine(37) in tRNA + S-adenosyl-L-methionine = N(1)-methylguanosine(37) in tRNA + S-adenosyl-L-homocysteine + H(+). In terms of biological role, specifically methylates guanosine-37 in various tRNAs. The sequence is that of tRNA (guanine-N(1)-)-methyltransferase from Finegoldia magna (strain ATCC 29328 / DSM 20472 / WAL 2508) (Peptostreptococcus magnus).